The sequence spans 604 residues: Integrin alpha-IIb (604 aa).

Residues glutamine 1–serine 61 form an FG-GAP repeat. At glutamine 1–arginine 558 the chain is on the extracellular side. Ca(2+) is bound by residues aspartate 22, aspartate 24, asparagine 26, tyrosine 28, and aspartate 30. Intrachain disulfides connect cysteine 69–cysteine 80 and cysteine 86–cysteine 141. A glycan (N-linked (GlcNAc...) asparagine) is linked at asparagine 166. 4 cysteine pairs are disulfide-bonded: cysteine 198–cysteine 204, cysteine 270–cysteine 283, cysteine 422–cysteine 486, and cysteine 476–cysteine 481. Asparagine 276 carries N-linked (GlcNAc...) asparagine glycosylation. The N-linked (GlcNAc...) asparagine glycan is linked to asparagine 527. A helical transmembrane segment spans residues alanine 559–tryptophan 584. The Cytoplasmic portion of the chain corresponds to lysine 585–glutamate 604. The short motif at glycine 587–arginine 591 is the GFFKR motif element.

The protein belongs to the integrin alpha chain family. Heterodimer of an alpha and a beta subunit. The alpha subunit is composed of a heavy and a light chain linked by a disulfide bond. Alpha-IIb associates with beta-3. Directly interacts with RNF181. Interacts (via C-terminus cytoplasmic tail region) with CIB1; the interaction is direct and calcium-dependent. Interacts (via C-terminus cytoplasmic tail region) with CIB2, CIB3 and CIB4; the interactions are stabilized/increased in a calcium and magnesium-dependent manner. ITGA2B:ITGB3 interacts with PPIA/CYPA; the interaction is ROS and PPIase activity-dependent and is increased in the presence of thrombin. ITGA2B:ITGB3 interacts with SELP (via C-type lectin domain); the interaction mediates cell-cell interaction and adhesion.

Its subcellular location is the membrane. Its function is as follows. Integrin alpha-IIb/beta-3 is a receptor for fibronectin, fibrinogen, plasminogen, prothrombin, thrombospondin and vitronectin. It recognizes the sequence R-G-D in a wide array of ligands. It recognizes the sequence H-H-L-G-G-G-A-K-Q-A-G-D-V in fibrinogen gamma chain. Following activation integrin alpha-IIb/beta-3 brings about platelet/platelet interaction through binding of soluble fibrinogen. This step leads to rapid platelet aggregation which physically plugs ruptured endothelial cell surface. This chain is Integrin alpha-IIb (ITGA2B), found in Papio cynocephalus (Yellow baboon).